Here is a 39-residue protein sequence, read N- to C-terminus: Photosystem II reaction center protein J (39 aa).

The chain crosses the membrane as a helical span at residues 9–29 (LWLVGLVGGFAVITIVSLFIY).

This sequence belongs to the PsbJ family. In terms of assembly, PSII is composed of 1 copy each of membrane proteins PsbA, PsbB, PsbC, PsbD, PsbE, PsbF, PsbH, PsbI, PsbJ, PsbK, PsbL, PsbM, PsbT, PsbX, PsbY, PsbZ, Psb30/Ycf12, at least 3 peripheral proteins of the oxygen-evolving complex and a large number of cofactors. It forms dimeric complexes.

The protein resides in the plastid. Its subcellular location is the chloroplast thylakoid membrane. One of the components of the core complex of photosystem II (PSII). PSII is a light-driven water:plastoquinone oxidoreductase that uses light energy to abstract electrons from H(2)O, generating O(2) and a proton gradient subsequently used for ATP formation. It consists of a core antenna complex that captures photons, and an electron transfer chain that converts photonic excitation into a charge separation. This is Photosystem II reaction center protein J from Thalassiosira pseudonana (Marine diatom).